Reading from the N-terminus, the 549-residue chain is Polymorphic pseudokinase ROP5 (549 aa).

The signal sequence occupies residues M1 to A24. Residues L234–L527 enclose the Protein kinase domain. ATP contacts are provided by R241, D244, R245, S246, K263, M337, P338, A340, D343, and D393. Residue D244 coordinates ADP. 5 residues coordinate ADP: S246, K263, M337, P338, and A340. D393 is a binding site for ADP. Mg(2+)-binding residues include D393 and D407. N434 carries an N-linked (GlcNAc...) asparagine glycan. C458 and C492 are oxidised to a cystine.

This sequence belongs to the protein kinase superfamily. Ser/Thr protein kinase family. In terms of assembly, component of a complex at least composed of ROP18 and ROP5. Interacts with GRA7. Interacts with ROP17. Interacts with mouse IRGA6/IIGP1; the interaction results in inhibition of IRGA6/IIGP1 GTPase activity and/or oligomerization.

The protein localises to the secreted. Its subcellular location is the parasitophorous vacuole. It localises to the cytoplasmic vesicle. It is found in the secretory vesicle. The protein resides in the rhoptry. Its function is as follows. Pseudokinase. Essential for virulence in the type I lineage. Mediates parasite survival in mouse monocytes. Required for the parasite ability to resist mouse innate immune effectors triggered by the IFN-gamma (IFNG). Reduces the accumulation of mouse IRGA6 (IIGP1) and IRGB6 (TGTP1/TGTP2), immunity-related GTPases (IRGs) that protect mice from infection by certain intracellular pathogens, on the parasitophorous vacuole and IRG-mediated killing of parasites by mouse cells. Regulates the activity of ROP18, an active kinase that targets IRGs to prevent IRG-mediated parasite killing by mouse cells. Acts as an allosteric inhibitor of mouse IRGA6 (IIGP1). Does not affect IFN-gamma (IFNG)-mediated parasite killing in human cells that do not possess the large variety of IRGs. The chain is Polymorphic pseudokinase ROP5 from Toxoplasma gondii.